A 160-amino-acid chain; its full sequence is Ribosome-binding factor A (160 aa).

Basic and acidic residues predominate over residues 112 to 122; it reads KARQSDEKVRE. A disordered region spans residues 112–160; sequence KARQSDEKVREASAGATYAGEADPYRKPDEDETDTEGAVEADETDDTAK. A compositionally biased stretch (acidic residues) spans 141 to 160; sequence EDETDTEGAVEADETDDTAK.

The protein belongs to the RbfA family. As to quaternary structure, monomer. Binds 30S ribosomal subunits, but not 50S ribosomal subunits or 70S ribosomes.

It is found in the cytoplasm. Its function is as follows. One of several proteins that assist in the late maturation steps of the functional core of the 30S ribosomal subunit. Associates with free 30S ribosomal subunits (but not with 30S subunits that are part of 70S ribosomes or polysomes). Required for efficient processing of 16S rRNA. May interact with the 5'-terminal helix region of 16S rRNA. The polypeptide is Ribosome-binding factor A (Streptomyces coelicolor (strain ATCC BAA-471 / A3(2) / M145)).